The primary structure comprises 273 residues: Large ribosomal subunit protein uL2cy (273 aa).

Disordered regions lie at residues 1 to 22 and 224 to 273; these read MAIHLYKTSTPSTRNGAVDSQV and NPVD…RRRK.

It belongs to the universal ribosomal protein uL2 family. In terms of assembly, part of the 50S ribosomal subunit.

It localises to the plastid. The protein resides in the chloroplast. The chain is Large ribosomal subunit protein uL2cy (rpl2-B) from Chloranthus spicatus (Chulantree).